The chain runs to 1063 residues: Structural polyprotein (1063 aa).

The tract at residues 1–131 is disordered; the sequence is MASTTPITME…LGPPTNPFQA (131 aa). Positions 30–69 are human C1QBP/SF2P32-binding; it reads GASQSRRPRPPRQRDSSTSGDDSGRDSGGPRRRRGNRGRG. Phosphoserine; by host is present on serine 46. A compositionally biased stretch (basic and acidic residues) spans 70-87; that stretch reads QLRDWSRAPPPPEERQES. Residues 93–107 show a composition bias toward pro residues; that stretch reads APKPSRAPPQQPQPP. Residues cysteine 153 and cysteine 197 are joined by a disulfide bond. The functions as E2 signal peptide stretch occupies residues 279–300; it reads GAPQAFLAGLLLAAVAVGTARA. The Extracellular segment spans residues 301 to 534; that stretch reads GLQPRADMAA…LWLATANALS (234 aa). Asparagine 353, asparagine 371, asparagine 410, and asparagine 429 each carry an N-linked (GlcNAc...) asparagine; by host glycan. A helical transmembrane segment spans residues 535–555; the sequence is LDHALAAFVLLVPWVLIFMVC. The Cytoplasmic portion of the chain corresponds to 556–582; that stretch reads RRACRRRGAAAALTAVVLQGYNPPAYG. The interval 563–582 is functions as E1 signal peptide; sequence GAAAALTAVVLQGYNPPAYG. Over 583–1028 the chain is Extracellular; it reads EEAFTYLCTA…QTWAEWAAAH (446 aa). Disulfide bonds link cysteine 590–cysteine 595, cysteine 619–cysteine 824, cysteine 641–cysteine 653, cysteine 699–cysteine 712, cysteine 758–cysteine 767, cysteine 807–cysteine 817, cysteine 931–cysteine 934, and cysteine 950–cysteine 983. Residue asparagine 658 is glycosylated (N-linked (GlcNAc...) asparagine; by host). Ca(2+) is bound by residues asparagine 670 and alanine 671. Residues aspartate 718 and threonine 719 each contribute to the Ca(2+) site. N-linked (GlcNAc...) asparagine; by host glycans are attached at residues asparagine 759 and asparagine 791. 2 O-linked (GalNAc...) threonine; by host glycosylation sites follow: threonine 1011 and threonine 1012. A helical transmembrane segment spans residues 1029-1049; it reads WWQLTLGAICALLLAGLLACC. Over 1050–1063 the chain is Extracellular; sequence AKCLYYLRGAIAPR.

As to quaternary structure, homodimer; further assembles into homooligomer. Interacts with human C1QBP. Interacts (via N-terminus) with protease/methyltransferase p150. In terms of assembly, heterodimer with spike glycoprotein E2. Heterodimer with spike glycoprotein E1. Post-translationally, structural polyprotein: Specific enzymatic cleavages in vivo yield mature proteins. Two signal peptidase-mediated cleavages within the polyprotein produce the structural proteins capsid, E2, and E1. The E2 signal peptide remains attached to the C-terminus of the capsid protein after cleavage by the signal peptidase. Another signal peptide at E2 C-terminus directs E1 to the ER, with a similar mechanism. Contains three N-linked oligosaccharides. In terms of processing, capsid is phosphorylated on Ser-46 by host. This phosphorylation negatively regulates capsid protein RNA-binding activity. Dephosphorylated by human PP1A.

The protein resides in the virion. It is found in the host cytoplasm. The protein localises to the host mitochondrion. Its subcellular location is the virion membrane. It localises to the host Golgi apparatus membrane. Functionally, capsid protein interacts with genomic RNA and assembles into icosahedric core particles 65-70 nm in diameter. The resulting nucleocapsid eventually associates with the cytoplasmic domain of E2 at the cell membrane, leading to budding and formation of mature virions from host Golgi membranes. Phosphorylation negatively regulates RNA-binding activity, possibly delaying virion assembly during the viral replication phase. Capsid protein dimerizes and becomes disulfide-linked in the virion. Modulates genomic RNA replication. Modulates subgenomic RNA synthesis by interacting with human C1QBP/SF2P32. Induces both perinuclear clustering of mitochondria and the formation of electron-dense intermitochondrial plaques, both hallmarks of rubella virus infected cells. Induces apoptosis when expressed in transfected cells. Responsible for viral attachment to target host cell, by binding to the cell receptor. Its transport to the plasma membrane depends on interaction with E1 protein. The surface glycoproteins display an irregular helical organization and a pseudo-tetrameric inner nucleocapsid arrangement. Its function is as follows. Class II viral fusion protein. Fusion activity is inactive as long as E1 is bound to E2 in mature virion. After virus attachment to target cell and clathrin-mediated endocytosis, acidification of the endosome would induce dissociation of E1/E2 heterodimer and concomitant trimerization of the E1 subunits. This E1 homotrimer is fusion active, and promotes release of viral nucleocapsid in cytoplasm after endosome and viral membrane fusion. The cytoplasmic tail of spike glycoprotein E1 modulates virus release. The surface glycoproteins display an irregular helical organization and a pseudo-tetrameric inner nucleocapsid arrangement. This chain is Structural polyprotein, found in Homo sapiens (Human).